The sequence spans 305 residues: Dihydroorotate dehydrogenase B (NAD(+)), catalytic subunit (305 aa).

FMN is bound by residues serine 23 and 47–48 (KG). Substrate contacts are provided by residues lysine 47 and 71–75 (NAIGL). Asparagine 101 and asparagine 129 together coordinate FMN. A substrate-binding site is contributed by asparagine 129. The active-site Nucleophile is the cysteine 132. FMN contacts are provided by lysine 167 and isoleucine 193. 194 to 195 (NT) contacts substrate. FMN contacts are provided by residues glycine 219, 245-246 (GG), and 267-268 (GT).

It belongs to the dihydroorotate dehydrogenase family. Type 1 subfamily. In terms of assembly, heterotetramer of 2 PyrK and 2 PyrD type B subunits. It depends on FMN as a cofactor.

The protein resides in the cytoplasm. It catalyses the reaction (S)-dihydroorotate + NAD(+) = orotate + NADH + H(+). It functions in the pathway pyrimidine metabolism; UMP biosynthesis via de novo pathway; orotate from (S)-dihydroorotate (NAD(+) route): step 1/1. Functionally, catalyzes the conversion of dihydroorotate to orotate with NAD(+) as electron acceptor. This Geobacter sp. (strain M21) protein is Dihydroorotate dehydrogenase B (NAD(+)), catalytic subunit (pyrD).